The sequence spans 112 residues: Serum amyloid A protein (112 aa).

At Q1 the chain carries Pyrrolidone carboxylic acid. Over residues 75–86 (MTRDQVREDTKA) the composition is skewed to basic and acidic residues. The segment at 75–112 (MTRDQVREDTKADQFANEWGRSGKDPNHFRPPGLPDKY) is disordered.

The protein belongs to the SAA family. As to expression, expressed by the liver; secreted in plasma.

Its subcellular location is the secreted. In terms of biological role, major acute phase reactant. Apolipoprotein of the HDL complex. This chain is Serum amyloid A protein (SAA1), found in Ovis aries (Sheep).